We begin with the raw amino-acid sequence, 81 residues long: Photosystem I iron-sulfur center (81 aa).

2 consecutive 4Fe-4S ferredoxin-type domains span residues 2–31 (AHSV…MVPR) and 39–68 (IASA…VRVY). [4Fe-4S] cluster is bound by residues cysteine 11, cysteine 14, cysteine 17, cysteine 21, cysteine 48, cysteine 51, cysteine 54, and cysteine 58.

As to quaternary structure, the eukaryotic PSI reaction center is composed of at least 11 subunits. The cofactor is [4Fe-4S] cluster.

The protein localises to the plastid. It is found in the chloroplast thylakoid membrane. It catalyses the reaction reduced [plastocyanin] + hnu + oxidized [2Fe-2S]-[ferredoxin] = oxidized [plastocyanin] + reduced [2Fe-2S]-[ferredoxin]. Functionally, apoprotein for the two 4Fe-4S centers FA and FB of photosystem I (PSI); essential for photochemical activity. FB is the terminal electron acceptor of PSI, donating electrons to ferredoxin. The C-terminus interacts with PsaA/B/D and helps assemble the protein into the PSI complex. Required for binding of PsaD and PsaE to PSI. PSI is a plastocyanin/cytochrome c6-ferredoxin oxidoreductase, converting photonic excitation into a charge separation, which transfers an electron from the donor P700 chlorophyll pair to the spectroscopically characterized acceptors A0, A1, FX, FA and FB in turn. This is Photosystem I iron-sulfur center from Antithamnion sp. (Red alga).